We begin with the raw amino-acid sequence, 446 residues long: MEKYLSVTTLTKYLKMKFDKDPYLERVYLTGQVSNFRKRPTHQYFSLKDDHAVIQATIWSGIYQKLGFDLEEGMKINVIGRVQVYEPSGSYSIIIEKAEPDGVGALAIQFEQLKKKLTEEGLFQERFKQALPQFSKRIGVVTSRSGAVIRDIITTVSRRFPGVDILLYPTKVQGEGAAEEIARNIARANQRDDLDLLIIGRGGGSIEDLWAFNEEIVVRAIFESRLPVISSVGHETDVTLADFVADRRAATPTAAAELATPVTKLDVLTHLQNQEKRMATAVRNVLSKKQEALKKCSQSVIFRQPERLYDGYLQRLDQLQLRLKQSLRTRISDNKQLVQARTHQLVQLSPVTKIQRYQDRLGQLDKLLGSQMALVYDAKVAEAKRLSEALLMLDTSRIVARGYAIVKKEESIVDSVESLKKKDQVTLLMRDGQVELEVKDVKTKEI.

Belongs to the XseA family. As to quaternary structure, heterooligomer composed of large and small subunits.

Its subcellular location is the cytoplasm. It carries out the reaction Exonucleolytic cleavage in either 5'- to 3'- or 3'- to 5'-direction to yield nucleoside 5'-phosphates.. In terms of biological role, bidirectionally degrades single-stranded DNA into large acid-insoluble oligonucleotides, which are then degraded further into small acid-soluble oligonucleotides. The chain is Exodeoxyribonuclease 7 large subunit from Streptococcus pneumoniae (strain ATCC 700669 / Spain 23F-1).